The chain runs to 165 residues: Large ribosomal subunit protein uL10 (165 aa).

Belongs to the universal ribosomal protein uL10 family. Part of the ribosomal stalk of the 50S ribosomal subunit. The N-terminus interacts with L11 and the large rRNA to form the base of the stalk. The C-terminus forms an elongated spine to which L12 dimers bind in a sequential fashion forming a multimeric L10(L12)X complex.

Forms part of the ribosomal stalk, playing a central role in the interaction of the ribosome with GTP-bound translation factors. This Buchnera aphidicola subsp. Schizaphis graminum (strain Sg) protein is Large ribosomal subunit protein uL10.